We begin with the raw amino-acid sequence, 1872 residues long: Ral GTPase-activating protein subunit alpha-2 (1872 aa).

The disordered stretch occupies residues 350-370 (DGAGSTEQDKSHSNSSTLSDR). Residues Ser373, Ser376, and Ser379 each carry the phosphoserine modification. Residues 445-469 (PDKKDVAQEDADKLGLSETDSKEAS) show a composition bias toward basic and acidic residues. Residues 445-481 (PDKKDVAQEDADKLGLSETDSKEASSESSGHKRSSSW) form a disordered region. Ser486 bears the Phosphoserine mark. Ser696 is subject to Phosphoserine; by PKB. Disordered regions lie at residues 711-730 (FRSA…NTVR) and 758-813 (QQVP…GITM). Residue Thr715 is modified to Phosphothreonine; by PKB. Polar residues-rich tracts occupy residues 758-768 (QQVPRSSSTSD) and 775-795 (SDSS…SEPK). Basic and acidic residues predominate over residues 796–810 (SVQESKGHVTHEHEG). Phosphoserine is present on residues Ser819 and Ser820. The tract at residues 831-851 (QQAHGRCRQRQTSESTGSDTV) is disordered. Polar residues predominate over residues 840–849 (RQTSESTGSD). Residue Ser1592 is modified to Phosphoserine. Residues 1634–1842 (LKNLDSRQCR…EERALYLEAI (209 aa)) enclose the Rap-GAP domain.

As to quaternary structure, component of the heterodimeric RalGAP2 complex with RALGAPB. Heterodimerization is required for activity. As to expression, abundantly expressed in testis, pancreas, lung, thymus, brown fat, and white fat.

The protein resides in the cytoplasm. In terms of biological role, catalytic subunit of the heterodimeric RalGAP2 complex which acts as a GTPase activator for the Ras-like small GTPases RALA and RALB. The sequence is that of Ral GTPase-activating protein subunit alpha-2 (Ralgapa2) from Mus musculus (Mouse).